The following is an 804-amino-acid chain: Phenylalanine--tRNA ligase beta subunit (804 aa).

In terms of domain architecture, tRNA-binding spans Arg-38–Ala-148. Residues His-401–Pro-476 enclose the B5 domain. Positions 454, 460, 463, and 464 each coordinate Mg(2+). The FDX-ACB domain maps to Ser-710–Arg-803.

This sequence belongs to the phenylalanyl-tRNA synthetase beta subunit family. Type 1 subfamily. In terms of assembly, tetramer of two alpha and two beta subunits. It depends on Mg(2+) as a cofactor.

The protein resides in the cytoplasm. It catalyses the reaction tRNA(Phe) + L-phenylalanine + ATP = L-phenylalanyl-tRNA(Phe) + AMP + diphosphate + H(+). The protein is Phenylalanine--tRNA ligase beta subunit of Brucella suis biovar 1 (strain 1330).